Consider the following 62-residue polypeptide: Photosystem II reaction center protein Z (62 aa).

Helical transmembrane passes span S8–A28 and F41–I61.

This sequence belongs to the PsbZ family. As to quaternary structure, PSII is composed of 1 copy each of membrane proteins PsbA, PsbB, PsbC, PsbD, PsbE, PsbF, PsbH, PsbI, PsbJ, PsbK, PsbL, PsbM, PsbT, PsbY, PsbZ, Psb30/Ycf12, at least 3 peripheral proteins of the oxygen-evolving complex and a large number of cofactors. It forms dimeric complexes.

Its subcellular location is the plastid. It is found in the chloroplast thylakoid membrane. Its function is as follows. May control the interaction of photosystem II (PSII) cores with the light-harvesting antenna, regulates electron flow through the 2 photosystem reaction centers. PSII is a light-driven water plastoquinone oxidoreductase, using light energy to abstract electrons from H(2)O, generating a proton gradient subsequently used for ATP formation. The chain is Photosystem II reaction center protein Z from Cryptomeria japonica (Japanese cedar).